The following is a 437-amino-acid chain: Adenylosuccinate synthetase (437 aa).

Residues 12–18 (GDEGKGK) and 40–42 (GHT) contribute to the GTP site. Aspartate 13 acts as the Proton acceptor in catalysis. Aspartate 13 and glycine 40 together coordinate Mg(2+). IMP is bound by residues 13-16 (DEGK), 38-41 (NAGH), threonine 128, arginine 142, glutamine 223, threonine 238, and arginine 302. The active-site Proton donor is histidine 41. 298–304 (TTTGRKR) is a binding site for substrate. GTP-binding positions include arginine 304, 330 to 332 (KLD), and 412 to 414 (SLG).

Belongs to the adenylosuccinate synthetase family. In terms of assembly, homodimer. It depends on Mg(2+) as a cofactor.

Its subcellular location is the cytoplasm. It carries out the reaction IMP + L-aspartate + GTP = N(6)-(1,2-dicarboxyethyl)-AMP + GDP + phosphate + 2 H(+). It functions in the pathway purine metabolism; AMP biosynthesis via de novo pathway; AMP from IMP: step 1/2. Functionally, plays an important role in the de novo pathway of purine nucleotide biosynthesis. Catalyzes the first committed step in the biosynthesis of AMP from IMP. The chain is Adenylosuccinate synthetase from Trichodesmium erythraeum (strain IMS101).